The following is a 1302-amino-acid chain: Ubiquitin conjugation factor E4 B (1302 aa).

Position 1 is an N-acetylmethionine (Met-1). The tract at residues 1–155 is disordered; sequence MEELSADEIR…EPSSGPEVSE (155 aa). Positions 16 to 33 are enriched in low complexity; the sequence is RLAGGQTSQPTTPLTSPQ. A phosphoserine mark is found at Ser-23 and Ser-31. A compositionally biased stretch (polar residues) spans 51-64; sequence QSLGLNVHNMTPAT. Positions 76 to 99 are enriched in low complexity; sequence SQSSEGVSSLSSSPSNSLETQSQS. Ser-84, Ser-88, Ser-90, Ser-101, Ser-103, Ser-105, and Ser-124 each carry phosphoserine. Positions 134–147 are enriched in basic and acidic residues; sequence NDRREKRSLSDKEP. At Ser-238 the chain carries Phosphoserine. A compositionally biased stretch (polar residues) spans 299–327; that stretch reads AASQLAVPSTPLSPHSAASGTAAGSQPSS. The disordered stretch occupies residues 299 to 406; sequence AASQLAVPST…SPSLGASGGA (108 aa). Positions 340-374 are enriched in low complexity; the sequence is ASSGVSILSSSPSPPALASSPQAVPASSSRQRPSS. Ser-383 is modified (phosphoserine). A compositionally biased stretch (low complexity) spans 384–400; that stretch reads PSATSRRPSSLRISPSL. Phosphoserine is present on residues Ser-803 and Ser-969. The tract at residues 1057–1077 is disordered; sequence NKEQWDQLPRDQQQARQSQLA. Residues 1066–1077 are compositionally biased toward low complexity; that stretch reads RDQQQARQSQLA. The 74-residue stretch at 1227–1300 folds into the U-box domain; it reads DAPDEFRDPL…QAWMREKQNS (74 aa). Ser-1265 is modified (phosphoserine).

It belongs to the ubiquitin conjugation factor E4 family. Interacts with VCP/p97. Interacts with STUB1/CHIP and UNC45B. In terms of processing, proteolytically cleaved by caspases during apoptosis. Cleaved efficiently at Asp-123 by caspase-6 and granzyme B. Cleaved with approximately 10-fold less efficiency at Asp-109 by caspase-3 and caspase-7. Expressed in differentiated myotubes (at protein level). Highest expression in ovary, testis, heart and skeletal muscle. Expression is low in colon, thymus and peripheral blood leukocytes. Almost undetectable in lung and spleen.

It is found in the cytoplasm. The protein localises to the nucleus. It carries out the reaction S-ubiquitinyl-[E2 ubiquitin-conjugating enzyme]-L-cysteine + [acceptor protein]-L-lysine = [E2 ubiquitin-conjugating enzyme]-L-cysteine + N(6)-ubiquitinyl-[acceptor protein]-L-lysine.. Its pathway is protein modification; protein ubiquitination. Functionally, ubiquitin-protein ligase that probably functions as an E3 ligase in conjunction with specific E1 and E2 ligases. May also function as an E4 ligase mediating the assembly of polyubiquitin chains on substrates ubiquitinated by another E3 ubiquitin ligase. May regulate myosin assembly in striated muscles together with STUB1 and VCP/p97 by targeting myosin chaperone UNC45B for proteasomal degradation. The protein is Ubiquitin conjugation factor E4 B of Homo sapiens (Human).